Reading from the N-terminus, the 238-residue chain is Octanoyltransferase (238 aa).

The region spanning 44–224 is the BPL/LPL catalytic domain; sequence AGGPDSLLLL…AVLDALDGRI (181 aa). Residues 82-89, 154-156, and 167-169 each bind substrate; these read RGGKITWH, AIG, and GFA. Cys185 functions as the Acyl-thioester intermediate in the catalytic mechanism.

Belongs to the LipB family.

The protein localises to the cytoplasm. The catalysed reaction is octanoyl-[ACP] + L-lysyl-[protein] = N(6)-octanoyl-L-lysyl-[protein] + holo-[ACP] + H(+). Its pathway is protein modification; protein lipoylation via endogenous pathway; protein N(6)-(lipoyl)lysine from octanoyl-[acyl-carrier-protein]: step 1/2. Its function is as follows. Catalyzes the transfer of endogenously produced octanoic acid from octanoyl-acyl-carrier-protein onto the lipoyl domains of lipoate-dependent enzymes. Lipoyl-ACP can also act as a substrate although octanoyl-ACP is likely to be the physiological substrate. This chain is Octanoyltransferase, found in Mycolicibacterium gilvum (strain PYR-GCK) (Mycobacterium gilvum (strain PYR-GCK)).